Consider the following 138-residue polypeptide: Nucleoside diphosphate kinase (138 aa).

Residues lysine 9, phenylalanine 57, arginine 85, threonine 91, arginine 102, and asparagine 112 each contribute to the ATP site. Histidine 120 functions as the Pros-phosphohistidine intermediate in the catalytic mechanism.

It belongs to the NDK family. Homotetramer. It depends on Mg(2+) as a cofactor.

The protein resides in the cytoplasm. It catalyses the reaction a 2'-deoxyribonucleoside 5'-diphosphate + ATP = a 2'-deoxyribonucleoside 5'-triphosphate + ADP. The enzyme catalyses a ribonucleoside 5'-diphosphate + ATP = a ribonucleoside 5'-triphosphate + ADP. Its function is as follows. Major role in the synthesis of nucleoside triphosphates other than ATP. The ATP gamma phosphate is transferred to the NDP beta phosphate via a ping-pong mechanism, using a phosphorylated active-site intermediate. This Streptococcus agalactiae serotype V (strain ATCC BAA-611 / 2603 V/R) protein is Nucleoside diphosphate kinase.